The following is a 671-amino-acid chain: Nucleolar GTP-binding protein 1 (671 aa).

The 182-residue stretch at 169 to 350 (RTVLICGYPN…VKNAACERLL (182 aa)) folds into the OBG-type G domain. Residues 175–182 (GYPNVGKS), 221–225 (DTPGI), and 289–292 (NKTD) each bind GTP. The tract at residues 516–671 (VAQNRSTVPR…KRGKGKTDRR (156 aa)) is disordered. Residues 595 to 605 (RAMSISRSQSR) are compositionally biased toward polar residues. Basic residues-rich tracts occupy residues 631-640 (NKSHKKRDKN) and 654-671 (RPKHLFSGKRGKGKTDRR).

The protein belongs to the TRAFAC class OBG-HflX-like GTPase superfamily. OBG GTPase family. NOG subfamily.

The protein resides in the nucleus. It is found in the nucleolus. Its function is as follows. Involved in the biogenesis of the 60S ribosomal subunit. The chain is Nucleolar GTP-binding protein 1 from Arabidopsis thaliana (Mouse-ear cress).